We begin with the raw amino-acid sequence, 211 residues long: Large ribosomal subunit protein uL3 (211 aa).

Residue glutamine 151 is modified to N5-methylglutamine.

It belongs to the universal ribosomal protein uL3 family. Part of the 50S ribosomal subunit. Forms a cluster with proteins L14 and L19. Methylated by PrmB.

Its function is as follows. One of the primary rRNA binding proteins, it binds directly near the 3'-end of the 23S rRNA, where it nucleates assembly of the 50S subunit. This is Large ribosomal subunit protein uL3 from Francisella tularensis subsp. tularensis (strain FSC 198).